The chain runs to 180 residues: Large ribosomal subunit protein uL5 (180 aa).

The protein belongs to the universal ribosomal protein uL5 family. In terms of assembly, part of the 50S ribosomal subunit; part of the 5S rRNA/L5/L18/L25 subcomplex. Contacts the 5S rRNA and the P site tRNA. Forms a bridge to the 30S subunit in the 70S ribosome.

In terms of biological role, this is one of the proteins that bind and probably mediate the attachment of the 5S RNA into the large ribosomal subunit, where it forms part of the central protuberance. In the 70S ribosome it contacts protein S13 of the 30S subunit (bridge B1b), connecting the 2 subunits; this bridge is implicated in subunit movement. Contacts the P site tRNA; the 5S rRNA and some of its associated proteins might help stabilize positioning of ribosome-bound tRNAs. This chain is Large ribosomal subunit protein uL5, found in Streptococcus equi subsp. equi (strain 4047).